Here is a 751-residue protein sequence, read N- to C-terminus: Amyloid-beta precursor protein (751 aa).

Residues 1 to 17 (MLPGLALLLLAAWTARA) form the signal peptide. The Extracellular portion of the chain corresponds to 18–682 (LEVPTDGNAG…AEDVGSNKGA (665 aa)). Positions 28 to 123 (LLAEPQIAMF…PYRCLVGEFV (96 aa)) are GFLD subdomain. The E1 domain maps to 28-189 (LLAEPQIAMF…RGVEFVCCPL (162 aa)). 6 cysteine pairs are disulfide-bonded: Cys38-Cys62, Cys73-Cys117, Cys98-Cys105, Cys133-Cys187, Cys144-Cys174, and Cys158-Cys186. Residue 96–110 (NWCKRDRKQCKTHPH) participates in heparin binding. Residues 131 to 189 (DKCKFLHQERMDVCETHLHWHTVAKETCSEKSTNLHDYGMLLPCGIDKFRGVEFVCCPL) form a cuBD subdomain region. Residues His147, His151, and Tyr168 each coordinate Cu(2+). A zinc-binding region spans residues 181–188 (GVEFVCCP). Positions 183, 186, and 187 each coordinate Zn(2+). The interval 195-284 (HVDSADAEED…TTTTTTESVE (90 aa)) is disordered. Ser198 and Ser206 each carry phosphoserine; by CK1 and CK2. 2 positions are modified to sulfotyrosine: Tyr217 and Tyr262. Positions 228–264 (VAEEEEVAEVEEEEADDDEDDEDGDEVEEEAEEPYEE) are enriched in acidic residues. The segment covering 268-281 (RTTSIATTTTTTTE) has biased composition (low complexity). 3 disulfides stabilise this stretch: Cys291/Cys341, Cys300/Cys324, and Cys316/Cys337. Residues 291–341 (CSEQAETGPCRAMISRWYFDVTEGKCAPFFYGGCGGNRNNFDTEEYCMAVC) form the BPTI/Kunitz inhibitor domain. Heparin-binding stretches follow at residues 316 to 344 (CAPF…CGSV) and 363 to 428 (PGDE…QEAA). Tyr336 carries the post-translational modification Sulfotyrosine. The OX-2 motif lies at 344-346 (VIP). The E2 domain occupies 355-546 (AVDKYLETPG…EEIQDEVDEL (192 aa)). Ser422 is modified (phosphoserine). Tyr478 carries the phosphotyrosine modification. A collagen-binding region spans residues 504-521 (AAQIRSQVMTHLRVIYER). N-linked (GlcNAc...) asparagine glycans are attached at residues Asn523 and Asn552. His658, Tyr662, His665, and His666 together coordinate Cu(2+). Zn(2+)-binding residues include His658, Tyr662, His665, and His666. Residues 676–703 (VGSNKGAIIGLMVGGVVIATVIVITLVM) are interaction with PSEN1. The helical transmembrane segment at 683-703 (IIGLMVGGVVIATVIVITLVM) threads the bilayer. The Cytoplasmic segment spans residues 704 to 751 (LKKKQYTSIHHGVVEVDAAVTPEERHLSKMQQNGYENPTYKFFEQMQN). The Basolateral sorting signal motif lies at 705-715 (KKKQYTSIHHG). The residue at position 710 (Thr710) is a Phosphothreonine. Ser711 is subject to Phosphoserine; by APP-kinase I. Residues 713-732 (HHGVVEVDAAVTPEERHLSK) form an interaction with G(o)-alpha region. The residue at position 724 (Thr724) is a Phosphothreonine; by CDK5 and MAPK10. The required for the interaction with KIF5B and for anterograde transport in axons stretch occupies residues 737–751 (GYENPTYKFFEQMQN). Tyr738 is subject to Phosphotyrosine; by ABL1. The YENPXY motif; contains endocytosis signal signature appears at 738-743 (YENPTY). A Glycyl lysine isopeptide (Lys-Gly) (interchain with G-Cter in ubiquitin) cross-link involves residue Lys744.

It belongs to the APP family. In terms of assembly, binds, via its C-terminus, to the PID domain of several cytoplasmic proteins, including APBB family members, the APBA family, MAPK8IP1, SHC1 and NUMB and DAB1. Binding to DAB1 inhibits its serine phosphorylation. Interacts (via NPXY motif) with DAB2 (via PID domain); the interaction is impaired by tyrosine phosphorylation of the NPXY motif. Also interacts with GPCR-like protein BPP, APPBP1, IB1, KNS2 (via its TPR domains), APPBP2 (via BaSS) and DDB1. In vitro, it binds MAPT via the MT-binding domains. Associates with microtubules in the presence of ATP and in a kinesin-dependent manner. Interacts, through a C-terminal domain, with GNAO1. Amyloid-beta protein 42 binds CHRNA7 in hippocampal neurons. Amyloid-beta associates with HADH2. Interacts with CPEB1, ANKS1B and AGER. Interacts with ITM2B. Interacts with ITM2C. Interacts with IDE. Can form homodimers; dimerization is enhanced in the presence of Cu(2+) ions. Can form homodimers; this is promoted by heparin binding. Amyloid-beta protein 40 interacts with S100A9. CTF-alpha product of APP interacts with GSAP. Isoform APP695 interacts with SORL1 (via N-terminal ectodomain); this interaction retains APP in the trans-Golgi network and reduces processing into soluble APP-alpha and amyloid-beta peptides. Isoform APP770 interacts with SORL1. The C99 fragment also interacts with SORL1. Interacts with PLD3. Interacts with VDAC1. Interacts with NSG1; could regulate APP processing. Amyloid-beta protein 42 interacts with FPR2. Interacts (via transmembrane region) with PSEN1; the interaction is direct. Interacts with LRRK2. Interacts (via cytoplasmic domain) with KIF5B. Interacts (via C-terminus) with APBB2/FE65L1 (via C-terminus). Interacts (via intracellular domain) with APBB3. Proteolytically processed under normal cellular conditions. Cleavage either by alpha-secretase, beta-secretase or theta-secretase leads to generation and extracellular release of soluble APP peptides, S-APP-alpha and S-APP-beta, and the retention of corresponding membrane-anchored C-terminal fragments, C80, C83 and C99. Subsequent processing of C80 and C83 by gamma-secretase yields P3 peptides. This is the major secretory pathway and is non-amyloidogenic. Alternatively, presenilin/nicastrin-mediated gamma-secretase processing of C99 releases the amyloid-beta proteins, amyloid-beta protein 40 and amyloid-beta protein 42, major components of amyloid plaques, and the cytotoxic C-terminal fragments, gamma-CTF(50), gamma-CTF(57) and gamma-CTF(59). PSEN1 cleavage is more efficient with C83 than with C99 as substrate (in vitro). Amyloid-beta protein 40 and Amyloid-beta protein 42 are cleaved by ACE. Many other minor amyloid-beta peptides, amyloid-beta 1-X peptides, are found in cerebral spinal fluid (CSF) including the amyloid-beta X-15 peptides, produced from the cleavage by alpha-secretase. In terms of processing, proteolytically cleaved by caspases during neuronal apoptosis. Cleavage at Asp-720 by either caspase-3, -8 or -9 results in the production of the neurotoxic C31 peptide and the increased production of amyloid-beta peptides. Post-translationally, N- and O-glycosylated. Phosphorylation in the C-terminal on tyrosine, threonine and serine residues is neuron-specific. Phosphorylation can affect APP processing, neuronal differentiation and interaction with other proteins. Phosphorylated on Thr-724 in neuronal cells by Cdc5 kinase and Mapk10, in dividing cells by Cdc2 kinase in a cell-cycle dependent manner with maximal levels at the G2/M phase and, in vitro, by GSK-3-beta. The Thr-724 phosphorylated form causes a conformational change which reduces binding of Fe65 family members. In dopaminergic (DA) neurons, phosphorylation on Thr-724 by LRKK2 promotes the production and the nuclear translocation of the APP intracellular domain (AICD) which induces DA neuron apoptosis. Phosphorylation on Tyr-738 is required for SHC binding. Phosphorylated in the extracellular domain by casein kinases on both soluble and membrane-bound APP. This phosphorylation is inhibited by heparin. In terms of processing, trophic-factor deprivation triggers the cleavage of surface APP by beta-secretase to release sAPP-beta which is further cleaved to release an N-terminal fragment of APP (N-APP). Post-translationally, amyloid-beta peptides are degraded by IDE. Sulfated on tyrosine residues.

It is found in the cell membrane. Its subcellular location is the membrane. The protein localises to the perikaryon. It localises to the cell projection. The protein resides in the growth cone. It is found in the clathrin-coated pit. Its subcellular location is the early endosome. The protein localises to the cytoplasmic vesicle. It localises to the endoplasmic reticulum. The protein resides in the golgi apparatus. It is found in the secreted. Its subcellular location is the cell surface. The protein localises to the nucleus. It localises to the cytoplasm. Functionally, functions as a cell surface receptor and performs physiological functions on the surface of neurons relevant to neurite growth, neuronal adhesion and axonogenesis. Interaction between APP molecules on neighboring cells promotes synaptogenesis. Involved in cell mobility and transcription regulation through protein-protein interactions. Can promote transcription activation through binding to APBB1-KAT5 and inhibit Notch signaling through interaction with Numb. Couples to apoptosis-inducing pathways such as those mediated by G(o) and JIP. Inhibits G(o)-alpha ATPase activity. Acts as a kinesin I membrane receptor, mediating the axonal transport of beta-secretase and presenilin 1. By acting as a kinesin I membrane receptor, plays a role in axonal anterograde transport of cargo towards synapses in axons. May be involved in copper homeostasis/oxidative stress through copper ion reduction. In vitro, copper-metallated APP induces neuronal death directly or is potentiated through Cu(2+)-mediated low-density lipoprotein oxidation. Can regulate neurite outgrowth through binding to components of the extracellular matrix such as heparin and collagen I and IV. Induces a AGER-dependent pathway that involves activation of p38 MAPK, resulting in internalization of amyloid-beta peptide and mitochondrial dysfunction in cultured cortical neurons. Provides Cu(2+) ions for GPC1 which are required for release of nitric oxide (NO) and subsequent degradation of the heparan sulfate chains on GPC1. Its function is as follows. Amyloid-beta peptides are lipophilic metal chelators with metal-reducing activity. Binds transient metals such as copper, zinc and iron. The gamma-CTF peptides as well as the caspase-cleaved peptides, including C31, are potent enhancers of neuronal apoptosis. This is Amyloid-beta precursor protein from Saimiri sciureus (Common squirrel monkey).